The primary structure comprises 510 residues: NAD(P)H-quinone oxidoreductase subunit 2 A, chloroplastic (510 aa).

13 helical membrane passes run 31–51 (FIFP…IDLT), 57–77 (TPWL…ALLF), 99–119 (IFQF…VEYI), 124–144 (MAIT…MFLC), 149–169 (LITI…LSGY), 183–203 (YLLM…WLYG), 229–249 (ISIA…PAPF), 295–315 (WHLL…LIAI), 323–343 (MLAY…IVGD), 354–374 (YMLF…LFGL), 395–415 (ALSS…AGFF), 418–438 (LYLF…IGLL), and 484–504 (MIVC…IIAI).

This sequence belongs to the complex I subunit 2 family. As to quaternary structure, NDH is composed of at least 16 different subunits, 5 of which are encoded in the nucleus.

The protein localises to the plastid. Its subcellular location is the chloroplast thylakoid membrane. The catalysed reaction is a plastoquinone + NADH + (n+1) H(+)(in) = a plastoquinol + NAD(+) + n H(+)(out). It catalyses the reaction a plastoquinone + NADPH + (n+1) H(+)(in) = a plastoquinol + NADP(+) + n H(+)(out). NDH shuttles electrons from NAD(P)H:plastoquinone, via FMN and iron-sulfur (Fe-S) centers, to quinones in the photosynthetic chain and possibly in a chloroplast respiratory chain. The immediate electron acceptor for the enzyme in this species is believed to be plastoquinone. Couples the redox reaction to proton translocation, and thus conserves the redox energy in a proton gradient. The chain is NAD(P)H-quinone oxidoreductase subunit 2 A, chloroplastic from Nymphaea alba (White water-lily).